We begin with the raw amino-acid sequence, 332 residues long: Opticin (332 aa).

The first 19 residues, 1-19 (MRLLAFLSLLALVLQETGT), serve as a signal peptide directing secretion. The interval 21 to 41 (SLPRKERKRREEQMPREGDSF) is disordered. The segment covering 29–39 (RREEQMPREGD) has biased composition (basic and acidic residues). A sulfotyrosine mark is found at Tyr-65 and Tyr-71. The interval 86 to 106 (ATSISPAKSTTAPGTPSSNPT) is disordered. The region spanning 116 to 153 (LLSSQPNHGLPTCLVCVCLGSSVYCDDIDLEDIPPLPR) is the LRRNT domain. Tyr-139 is subject to Sulfotyrosine. LRR repeat units lie at residues 154-175 (RTAY…DFKG), 178-199 (KLKR…AFRL), 202-223 (ALQD…PSGI), 248-269 (KLQF…LPLS), 270-290 (LRSV…VFCD), and 300-320 (QLED…PSAY). A disulfide bond links Cys-289 and Cys-322. A glycan (N-linked (GlcNAc...) asparagine) is linked at Asn-312.

It belongs to the small leucine-rich proteoglycan (SLRP) family. SLRP class III subfamily. In terms of assembly, homodimer. Post-translationally, O-glycosylated. In terms of processing, proteolytically cleaved by MMP1, MMP2, MMP3, MMP7, MMP8, MMP9, ADAMTS4, and ADAMTS5. Proteolytically cleaved by MMP13. The degradation of OPTC by proteases may contribute to osteoarthritis pathophysiology. Sulfated on tyrosine residues. Expressed in cartilage and synovial membranes (at protein level). Expressed in the retina, iris, ligament, skin and fetal liver (at protein level). Expressed in the retinal pigment epithelium (at protein level). Expressed in synovial fibroblasts and subchondral bone osteoblasts.

It localises to the secreted. The protein localises to the extracellular space. It is found in the extracellular matrix. Functionally, inhibits angiogenesis in the vitreous humor of the eye, and therefore represses neovascularization. Binds collagen fibrils. May be involved in collagen fiber organization via regulation of other members of the small leucine-rich repeat proteoglycan superfamily. This Homo sapiens (Human) protein is Opticin (OPTC).